The primary structure comprises 1567 residues: Putative DEAH-box ATP-dependent helicase UM11114 (1567 aa).

2 disordered regions span residues 1 to 95 (MAPR…PGSK) and 670 to 734 (ESSV…ETRR). Residues 10–20 (IKSSGTTSSKA) show a composition bias toward polar residues. Composition is skewed to low complexity over residues 39–48 (TKAAKQQQTQ) and 55–73 (AISA…AASS). Over residues 74-83 (AGGGGGGGQG) the composition is skewed to gly residues. 2 stretches are compositionally biased toward polar residues: residues 670–687 (ESSV…TPTG) and 713–726 (LQRQ…SPSY). The 179-residue stretch at 746-924 (LGLIRSNRVV…FGKAPCISIP (179 aa)) folds into the Helicase ATP-binding domain. Residue 759-766 (GETGCGKT) coordinates ATP. The DEAH box signature appears at 871–874 (DEVH). In terms of domain architecture, Helicase C-terminal spans 1003 to 1184 (VVRYVVERAE…SLFLEVKSMR (182 aa)).

This sequence belongs to the DEAD box helicase family. DEAH subfamily.

The sequence is that of Putative DEAH-box ATP-dependent helicase UM11114 from Mycosarcoma maydis (Corn smut fungus).